The chain runs to 487 residues: N-succinylglutamate 5-semialdehyde dehydrogenase (487 aa).

221–226 (GSSRTG) contributes to the NAD(+) binding site. Active-site residues include glutamate 244 and cysteine 278.

The protein belongs to the aldehyde dehydrogenase family. AstD subfamily.

The catalysed reaction is N-succinyl-L-glutamate 5-semialdehyde + NAD(+) + H2O = N-succinyl-L-glutamate + NADH + 2 H(+). It participates in amino-acid degradation; L-arginine degradation via AST pathway; L-glutamate and succinate from L-arginine: step 4/5. In terms of biological role, catalyzes the NAD-dependent reduction of succinylglutamate semialdehyde into succinylglutamate. The sequence is that of N-succinylglutamate 5-semialdehyde dehydrogenase from Pseudomonas putida (strain GB-1).